A 983-amino-acid chain; its full sequence is Importin beta-like protein kap113 (983 aa).

One can recognise an Importin N-terminal domain in the interval 24–96 (AEGHLNNWKK…RCNALLGSIK (73 aa)).

The protein belongs to the importin beta family.

Its subcellular location is the nucleus. Functions as a component of the nuclear pore complex (NPC). NPC components, collectively referred to as nucleoporins (NUPs), can play the role of both NPC structural components and of docking or interaction partners for transiently associated nuclear transport factors. Active directional transport is assured by both, a Phe-Gly (FG) repeat affinity gradient for these transport factors across the NPC and a transport cofactor concentration gradient across the nuclear envelope. Involved in the export of mRNA from the nucleus to the cytoplasm. May play a role in mitotic spindle formation and/or function. This chain is Importin beta-like protein kap113 (kap113), found in Schizosaccharomyces pombe (strain 972 / ATCC 24843) (Fission yeast).